Reading from the N-terminus, the 337-residue chain is Major outer membrane protein P.IB (337 aa).

A signal peptide spans 1-19; it reads MKKSLIALTLAALPVAAMA.

This sequence belongs to the Gram-negative porin family. In terms of assembly, homotrimer.

It localises to the cell outer membrane. Its function is as follows. Serves as a slightly cation selective porin. The polypeptide is Major outer membrane protein P.IB (por) (Neisseria lactamica).